The sequence spans 225 residues: Pre-mRNA-splicing factor SPF27 (225 aa).

Alanine 2 bears the N-acetylalanine mark. Position 94 is a phosphoserine (serine 94). Residues 138 to 222 are a coiled coil; that stretch reads YNENLVHMIE…HGEANKENIR (85 aa).

It belongs to the SPF27 family. As to quaternary structure, component of the pre-catalytic and catalytic spliceosome complexes. Component of the postcatalytic spliceosome P complex. Component of the PRP19-CDC5L splicing complex composed of a core complex comprising a homotetramer of PRPF19, CDC5L, PLRG1 and BCAS2, and at least three less stably associated proteins CTNNBL1, CWC15 and HSPA8. Interacts directly in the complex with PRPF19, CDC5L and PLRG1. In terms of tissue distribution, ubiquitously expressed.

It is found in the nucleus. It localises to the nucleolus. Required for pre-mRNA splicing as component of the activated spliceosome. Component of the PRP19-CDC5L complex that forms an integral part of the spliceosome and is required for activating pre-mRNA splicing. May have a scaffolding role in the spliceosome assembly as it contacts all other components of the core complex. The PRP19-CDC5L complex may also play a role in the response to DNA damage (DDR). This is Pre-mRNA-splicing factor SPF27 (BCAS2) from Homo sapiens (Human).